The sequence spans 682 residues: Cyclic nucleotide-gated cation channel (682 aa).

Residues 1-41 (MTGQAALERSVSSHRLSVRSRLEGEAERAESAISRTDGDDD) form a disordered region. Topologically, residues 1-136 (MTGQAALERS…EGFVVSQSDD (136 aa)) are cytoplasmic. Residues 20–30 (SRLEGEAERAE) show a composition bias toward basic and acidic residues. A helical membrane pass occupies residues 137–157 (IYYYWLFFIALASLYNWIMLV). The Extracellular segment spans residues 158-169 (ARACFDQLQDEN). The chain crosses the membrane as a helical span at residues 170–190 (FFLWVGLDYLCDVIYILDTCI). The Cytoplasmic segment spans residues 191 to 218 (RLRTGYLEQGLLVKDLAKLRDNYIRTLQ). Residues 219-239 (FKLDFLSILPTELLFFVTGYV) traverse the membrane as a helical segment. Topologically, residues 240–272 (PQLRFNRLLRFSRMFEFFDRTETRTNYPNAFRI) are extracellular. The helical transmembrane segment at 273–293 (CNLILYILVIIHWNACIYYAI) threads the bilayer. At 294–311 (SKALGLSSDTWVYSGQNK) the chain is on the cytoplasmic side. A helical transmembrane segment spans residues 312 to 332 (TLSFCYVYCFYWSTLTLTTIG). Topologically, residues 333–343 (EMPPPVKDEEY) are extracellular. The helical transmembrane segment at 344–364 (VFVVFDFLVGVLIFATIVGNV) threads the bilayer. The Cytoplasmic portion of the chain corresponds to 365–682 (GSMIANMNAT…SAETNSEEET (318 aa)). 3',5'-cyclic AMP contacts are provided by residues 455-577 (LLVE…QGLL), E514, and R529. The segment at 649-682 (GEHAGVPTHTHADIHAQPETHTRTSAETNSEEET) is disordered. Residues 658–672 (THADIHAQPETHTRT) show a composition bias toward basic and acidic residues.

This sequence belongs to the cyclic nucleotide-gated cation channel (TC 1.A.1.5) family. Olfactory neurons.

Its subcellular location is the membrane. In terms of biological role, this cyclic nucleotide-gated channel is activated equally well by both cAMP and cGMP. The chain is Cyclic nucleotide-gated cation channel from Ictalurus punctatus (Channel catfish).